The primary structure comprises 279 residues: MARVENMTERYAVFGNPIGHSKSPKIHTMFAKETGQSLSYEAILAPIDAFEASFKEFAANEGYGANVTVPFKEQAFSLCDELSEQAQLAGAVNTLSVLADGKIRGDNTDGLGLVADLKRNLGDLCGLQVLLIGAGGAARGSVLPLLHSGIAKLTIVNRTQAKAEALVEIFTSYGDVTSLPITHVGQSYDVIINSTSSSLSGEVPNISPDTIAPHTVCYDMMYGKQSTAFNLWAKSLGAGQTIDGLGMLVGQAAASFSIWRKVTPSVEPVLAQLRSELIG.

Residues 21–23 (SKS) and Thr68 contribute to the shikimate site. Lys72 serves as the catalytic Proton acceptor. Glu84 contributes to the NADP(+) binding site. Residues Asn93 and Asp109 each contribute to the shikimate site. Residues 133-137 (GAGGA), 157-162 (NRTQAK), and Met220 contribute to the NADP(+) site. Tyr222 lines the shikimate pocket. Gly244 is an NADP(+) binding site.

The protein belongs to the shikimate dehydrogenase family. Homodimer.

The enzyme catalyses shikimate + NADP(+) = 3-dehydroshikimate + NADPH + H(+). It participates in metabolic intermediate biosynthesis; chorismate biosynthesis; chorismate from D-erythrose 4-phosphate and phosphoenolpyruvate: step 4/7. Functionally, involved in the biosynthesis of the chorismate, which leads to the biosynthesis of aromatic amino acids. Catalyzes the reversible NADPH linked reduction of 3-dehydroshikimate (DHSA) to yield shikimate (SA). This is Shikimate dehydrogenase (NADP(+)) from Shewanella halifaxensis (strain HAW-EB4).